We begin with the raw amino-acid sequence, 837 residues long: MSLLLSFYLLGLLVSSGQALLQVTISLSKVELSVGESKFFTCTAIGEPESIDWYNPQGEKIISTQRVVVQKEGVRSRLTIYNANIEDAGIYRCQATDAKGQTQEATVVLEIYQKLTFREVVSPQEFKQGEDAEVVCRVSSSPAPAVSWLYHNEEVTTISDNRFAMLANNNLQILNINKSDEGIYRCEGRVEARGEIDFRDIIVIVNVPPAISMPQKSFNATAERGEEMTFSCRASGSPEPAISWFRNGKLIEENEKYILKGSNTELTVRNIINSDGGPYVCRATNKAGEDEKQAFLQVFVQPHIIQLKNETTYENGQVTLVCDAEGEPIPEITWKRAVDGFTFTEGDKSLDGRIEVKGQHGSSSLHIKDVKLSDSGRYDCEAASRIGGHQKSMYLDIEYAPKFISNQTIYYSWEGNPINISCDVKSNPPASIHWRRDKLVLPAKNTTNLKTYSTGRKMILEIAPTSDNDFGRYNCTATNHIGTRFQEYILALADVPSSPYGVKIIELSQTTAKVSFNKPDSHGGVPIHHYQVDVKEVASEIWKIVRSHGVQTMVVLNNLEPNTTYEIRVAAVNGKGQGDYSKIEIFQTLPVREPSPPSIHGQPSSGKSFKLSITKQDDGGAPILEYIVKYRSKDKEDQWLEKKVQGNKDHIILEHLQWTMGYEVQITAANRLGYSEPTVYEFSMPPKPNIIKDTLFNGLGLGAVIGLGVAALLLILVVTDVSCFFIRQCGLLMCITRRMCGKKSGSSGKSKELEEGKAAYLKDGSKEPIVEMRTEDERVTNHEDGSPVNEPNETTPLTEPEKLPLKEEDGKEALNPETIEIKVSNDIIQSKEDDSKA.

Positions 1–19 are cleaved as a signal peptide; it reads MSLLLSFYLLGLLVSSGQA. Over 20–697 the chain is Extracellular; sequence LLQVTISLSK…PNIIKDTLFN (678 aa). Ig-like C2-type domains are found at residues 21–108, 113–202, 208–297, 302–396, and 401–491; these read LQVT…ATVV, QKLT…RDII, PPAI…AFLQ, PHII…MYLD, and PKFI…YILA. 2 disulfides stabilise this stretch: Cys-42-Cys-93 and Cys-136-Cys-186. N-linked (GlcNAc...) asparagine glycans are attached at residues Asn-177 and Asn-219. Cys-232 and Cys-281 are disulfide-bonded. A glycan (N-linked (GlcNAc...) asparagine) is linked at Asn-309. Cysteines 322 and 380 form a disulfide. Asn-406, Asn-419, Asn-445, Asn-474, and Asn-562 each carry an N-linked (GlcNAc...) asparagine glycan. Residues Cys-422 and Cys-475 are joined by a disulfide bond. 2 Fibronectin type-III domains span residues 498–591 and 593–688; these read SPYG…TLPV and EPSP…PPKP. A helical transmembrane segment spans residues 698 to 718; that stretch reads GLGLGAVIGLGVAALLLILVV. The Cytoplasmic segment spans residues 719–837; that stretch reads TDVSCFFIRQ…IQSKEDDSKA (119 aa). Over residues 764-785 the composition is skewed to basic and acidic residues; that stretch reads GSKEPIVEMRTEDERVTNHEDG. The tract at residues 764-818 is disordered; it reads GSKEPIVEMRTEDERVTNHEDGSPVNEPNETTPLTEPEKLPLKEEDGKEALNPET. Position 765 is a phosphoserine (Ser-765). Thr-780 carries the phosphothreonine modification. Position 786 is a phosphoserine (Ser-786). The segment covering 789-798 has biased composition (low complexity); that stretch reads NEPNETTPLT. Positions 799 to 814 are enriched in basic and acidic residues; the sequence is EPEKLPLKEEDGKEAL.

In terms of tissue distribution, expressed most strongly in adult and fetal brain.

Its subcellular location is the cell membrane. In terms of biological role, may play important roles in selective fasciculation and zone-to-zone projection of the primary olfactory axons. The chain is Neural cell adhesion molecule 2 (NCAM2) from Homo sapiens (Human).